The chain runs to 644 residues: Exoribonuclease 2 (644 aa).

The RNB domain occupies 189 to 516 (REDLTALDFV…NHRLLKAVIK (328 aa)). Residues 561-643 (DTRFAAEIVD…ETRSIIARPV (83 aa)) enclose the S1 motif domain.

Belongs to the RNR ribonuclease family. RNase II subfamily.

It is found in the cytoplasm. The catalysed reaction is Exonucleolytic cleavage in the 3'- to 5'-direction to yield nucleoside 5'-phosphates.. Functionally, involved in mRNA degradation. Hydrolyzes single-stranded polyribonucleotides processively in the 3' to 5' direction. This chain is Exoribonuclease 2, found in Escherichia coli O8 (strain IAI1).